The sequence spans 366 residues: Carbamoyl phosphate synthase small chain (366 aa).

The CPSase stretch occupies residues 1–171 (MQSKRYLVLE…KTPYVSTGKD (171 aa)). Residues serine 47, glycine 221, and glycine 223 each contribute to the L-glutamine site. In terms of domain architecture, Glutamine amidotransferase type-1 spans 173–360 (SVVLVDFGKK…VAMMTNFKEK (188 aa)). Cysteine 248 serves as the catalytic Nucleophile. L-glutamine-binding residues include leucine 249, glutamine 252, asparagine 290, glycine 292, and tyrosine 293. Residues histidine 333 and glutamate 335 contribute to the active site.

This sequence belongs to the CarA family. In terms of assembly, composed of two chains; the small (or glutamine) chain promotes the hydrolysis of glutamine to ammonia, which is used by the large (or ammonia) chain to synthesize carbamoyl phosphate. Tetramer of heterodimers (alpha,beta)4.

It catalyses the reaction hydrogencarbonate + L-glutamine + 2 ATP + H2O = carbamoyl phosphate + L-glutamate + 2 ADP + phosphate + 2 H(+). It carries out the reaction L-glutamine + H2O = L-glutamate + NH4(+). The protein operates within amino-acid biosynthesis; L-arginine biosynthesis; carbamoyl phosphate from bicarbonate: step 1/1. Its pathway is pyrimidine metabolism; UMP biosynthesis via de novo pathway; (S)-dihydroorotate from bicarbonate: step 1/3. In terms of biological role, small subunit of the glutamine-dependent carbamoyl phosphate synthetase (CPSase). CPSase catalyzes the formation of carbamoyl phosphate from the ammonia moiety of glutamine, carbonate, and phosphate donated by ATP, constituting the first step of 2 biosynthetic pathways, one leading to arginine and/or urea and the other to pyrimidine nucleotides. The small subunit (glutamine amidotransferase) binds and cleaves glutamine to supply the large subunit with the substrate ammonia. The polypeptide is Carbamoyl phosphate synthase small chain (Staphylococcus aureus (strain COL)).